A 597-amino-acid chain; its full sequence is Probable serine/threonine-protein kinase DDB_G0281745 (597 aa).

The segment covering 49–61 has biased composition (polar residues); sequence TIDNSNGKQSTTP. The segment at 49–320 is disordered; the sequence is TIDNSNGKQS…RNNESTATTA (272 aa). Positions 72–97 are enriched in pro residues; that stretch reads QPPPQQSQQQPPQPLKPIPATRPVPT. A compositionally biased stretch (polar residues) spans 114–140; it reads TLPTTNSSTKYSTLPSRQFFEVSSSPG. A compositionally biased stretch (low complexity) spans 157-168; sequence SLSSNQNGSNLN. The segment covering 208–234 has biased composition (pro residues); that stretch reads PSPPSPPLQSPQPTPQQQPPPLKPIPQ. Low complexity predominate over residues 235–264; it reads PQQQQQQQQQQQQQQQQQQQQQQQQQQQQQ. The segment covering 265–274 has biased composition (pro residues); sequence QPPPLKPIPQ. Low complexity predominate over residues 275-301; that stretch reads PQQSQPTQPIKSQIQIPITNTNGNTNG. The Protein kinase domain occupies 334–585; the sequence is KFVGNEIGSG…KVLDTIQNIY (252 aa). Residues 340-348 and K361 each bind ATP; that span reads IGSGKYGSV. The active-site Proton acceptor is the D454.

This sequence belongs to the protein kinase superfamily. TKL Ser/Thr protein kinase family.

The catalysed reaction is L-seryl-[protein] + ATP = O-phospho-L-seryl-[protein] + ADP + H(+). It catalyses the reaction L-threonyl-[protein] + ATP = O-phospho-L-threonyl-[protein] + ADP + H(+). The polypeptide is Probable serine/threonine-protein kinase DDB_G0281745 (Dictyostelium discoideum (Social amoeba)).